The chain runs to 159 residues: Protein Smg homolog (159 aa).

This sequence belongs to the Smg family.

The polypeptide is Protein Smg homolog (Vibrio parahaemolyticus serotype O3:K6 (strain RIMD 2210633)).